A 367-amino-acid polypeptide reads, in one-letter code: Chorismate synthase (367 aa).

Arg-48 is an NADP(+) binding site. FMN-binding positions include 125-127, Gly-284, 299-303, and Arg-325; these read RSS and KPTPS.

It belongs to the chorismate synthase family. In terms of assembly, homotetramer. It depends on FMNH2 as a cofactor.

It carries out the reaction 5-O-(1-carboxyvinyl)-3-phosphoshikimate = chorismate + phosphate. It functions in the pathway metabolic intermediate biosynthesis; chorismate biosynthesis; chorismate from D-erythrose 4-phosphate and phosphoenolpyruvate: step 7/7. Functionally, catalyzes the anti-1,4-elimination of the C-3 phosphate and the C-6 proR hydrogen from 5-enolpyruvylshikimate-3-phosphate (EPSP) to yield chorismate, which is the branch point compound that serves as the starting substrate for the three terminal pathways of aromatic amino acid biosynthesis. This reaction introduces a second double bond into the aromatic ring system. This Lachnoclostridium phytofermentans (strain ATCC 700394 / DSM 18823 / ISDg) (Clostridium phytofermentans) protein is Chorismate synthase.